A 320-amino-acid polypeptide reads, in one-letter code: o-succinylbenzoate synthase (320 aa).

Lys133 acts as the Proton donor in catalysis. Mg(2+) contacts are provided by Asp161, Glu190, and Asp213. Lys235 serves as the catalytic Proton acceptor.

Belongs to the mandelate racemase/muconate lactonizing enzyme family. MenC type 1 subfamily. It depends on a divalent metal cation as a cofactor.

The enzyme catalyses (1R,6R)-6-hydroxy-2-succinyl-cyclohexa-2,4-diene-1-carboxylate = 2-succinylbenzoate + H2O. Its pathway is quinol/quinone metabolism; 1,4-dihydroxy-2-naphthoate biosynthesis; 1,4-dihydroxy-2-naphthoate from chorismate: step 4/7. It participates in quinol/quinone metabolism; menaquinone biosynthesis. Converts 2-succinyl-6-hydroxy-2,4-cyclohexadiene-1-carboxylate (SHCHC) to 2-succinylbenzoate (OSB). The polypeptide is o-succinylbenzoate synthase (Salmonella arizonae (strain ATCC BAA-731 / CDC346-86 / RSK2980)).